A 249-amino-acid polypeptide reads, in one-letter code: MDAFYSTSSAYGAAASGWGYDSLKNFRQISPAVQSHLKLVYLTLCVALAASAVGAYLHVALNIGGMLTMLGCVGSIAWLFSVPVFEERKRFGILLAAALLEGASVGPLIKLAVDFDSSILVTAFVGTAIAFGCFTCAAIVAKRREYLYLGGLLSSGLSILLWLQFAASIFGHSTGSFMFEVYFGLLIFLGYMVYDTQEIIERAHHGDMDYIKHALTLFTDFVAVLVRILVIMLKNASDKSEEKKRKKRS.

6 helical membrane-spanning segments follow: residues 39–59, 65–85, 93–113, 119–139, 151–171, and 213–233; these read LVYL…YLHV, GMLT…VPVF, ILLA…KLAV, ILVT…CAAI, GLLS…SIFG, and HALT…VIML.

Belongs to the BI1 family. Ubiquitous.

The protein localises to the membrane. Its function is as follows. Suppressor of apoptosis. This chain is Bax inhibitor 1 (BI1), found in Oryza sativa subsp. japonica (Rice).